We begin with the raw amino-acid sequence, 400 residues long: Tryptophan synthase beta chain (400 aa).

The residue at position 92 (Lys-92) is an N6-(pyridoxal phosphate)lysine.

The protein belongs to the TrpB family. As to quaternary structure, tetramer of two alpha and two beta chains. Requires pyridoxal 5'-phosphate as cofactor.

The enzyme catalyses (1S,2R)-1-C-(indol-3-yl)glycerol 3-phosphate + L-serine = D-glyceraldehyde 3-phosphate + L-tryptophan + H2O. Its pathway is amino-acid biosynthesis; L-tryptophan biosynthesis; L-tryptophan from chorismate: step 5/5. In terms of biological role, the beta subunit is responsible for the synthesis of L-tryptophan from indole and L-serine. The chain is Tryptophan synthase beta chain from Leptospira borgpetersenii serovar Hardjo-bovis (strain JB197).